We begin with the raw amino-acid sequence, 426 residues long: Glutamate-1-semialdehyde 2,1-aminomutase (426 aa).

Lys265 bears the N6-(pyridoxal phosphate)lysine mark.

It belongs to the class-III pyridoxal-phosphate-dependent aminotransferase family. HemL subfamily. Homodimer. Pyridoxal 5'-phosphate serves as cofactor.

The protein resides in the cytoplasm. The catalysed reaction is (S)-4-amino-5-oxopentanoate = 5-aminolevulinate. It functions in the pathway porphyrin-containing compound metabolism; protoporphyrin-IX biosynthesis; 5-aminolevulinate from L-glutamyl-tRNA(Glu): step 2/2. The sequence is that of Glutamate-1-semialdehyde 2,1-aminomutase from Marinobacter nauticus (strain ATCC 700491 / DSM 11845 / VT8) (Marinobacter aquaeolei).